The primary structure comprises 637 residues: Chaperone protein HtpG (637 aa).

The tract at residues Met-1–Arg-338 is a; substrate-binding. The interval Glu-339–Arg-558 is b. Residues Lys-493 to Gly-512 are disordered. A c region spans residues Phe-559–Ile-637.

The protein belongs to the heat shock protein 90 family. As to quaternary structure, homodimer.

The protein localises to the cytoplasm. Molecular chaperone. Has ATPase activity. The sequence is that of Chaperone protein HtpG from Wolbachia sp. subsp. Brugia malayi (strain TRS).